Reading from the N-terminus, the 2185-residue chain is Genome polyprotein (2185 aa).

Gly2 carries N-myristoyl glycine; by host lipidation. The Cytoplasmic segment spans residues 2–1495 (GAQVSTQKTG…HVSRAFICLQ (1494 aa)). The interval 566-582 (FYQGPPGEAVERAIARV) is amphipathic alpha-helix. Residues His872 and Asp890 each act as for protease 2A activity in the active site. The Zn(2+) site is built by Cys907 and Cys909. The active-site For protease 2A activity is the Cys961. Residues Cys967 and His969 each coordinate Zn(2+). Residues 1101 to 1173 (NNNWLKKFTE…EQSAPSQSDQ (73 aa)) form a membrane-binding region. The interval 1101–1239 (NNNWLKKFTE…SPGAGKSVAT (139 aa)) is oligomerization. The interval 1122–1126 (AVKIQ) is RNA-binding. The SF3 helicase domain maps to 1205-1361 (EKKMSNYIQF…SMYSQNGKIN (157 aa)). Residues Cys1369, Cys1381, and Cys1386 each coordinate Zn(2+). The C4-type; degenerate zinc finger occupies 1369–1386 (CDEECCPVNFKRCCPLVC). The segment at 1413–1420 (EYNHRHSV) is RNA-binding. Positions 1424–1429 (LEALFQ) are oligomerization. The stretch at 1496–1511 (ALTTFVSVAGIIYIIY) is an intramembrane region. Topologically, residues 1512–2185 (KLFAGFQGAY…TLRRKWLDSF (674 aa)) are cytoplasmic. Tyr1521 carries the O-(5'-phospho-RNA)-tyrosine modification. Residues 1541 to 1719 (GPAFEFAVAM…FSAALLKHYF (179 aa)) enclose the Peptidase C3 domain. Active-site for protease 3C activity residues include His1580, Glu1611, and Cys1687. The RdRp catalytic domain occupies 1950–2066 (GHLIAFDYSG…SYPWPIDASL (117 aa)). 2 residues coordinate Mg(2+): Asp1956 and Asp2052.

Belongs to the picornaviruses polyprotein family. In terms of assembly, interacts with capsid protein VP1 and capsid protein VP3 to form heterotrimeric protomers. Interacts with capsid protein VP0, and capsid protein VP3 to form heterotrimeric protomers. Five protomers subsequently associate to form pentamers which serve as building blocks for the capsid. Interacts with capsid protein VP2, capsid protein VP3 and capsid protein VP4 following cleavage of capsid protein VP0. As to quaternary structure, interacts with capsid protein VP1 and capsid protein VP3 in the mature capsid. In terms of assembly, interacts with capsid protein VP0 and capsid protein VP1 to form heterotrimeric protomers. Five protomers subsequently associate to form pentamers which serve as building blocks for the capsid. Interacts with capsid protein VP4 in the mature capsid. Interacts with protein 2C; this interaction may be important for virion morphogenesis. Interacts with capsid protein VP1 and capsid protein VP3. As to quaternary structure, homodimer. In terms of assembly, homohexamer; forms a hexameric ring structure with 6-fold symmetry characteristic of AAA+ ATPases. Interacts (via N-terminus) with host RTN3 (via reticulon domain); this interaction is important for viral replication. Interacts with capsid protein VP3; this interaction may be important for virion morphogenesis. Interacts with protein 3CD. As to quaternary structure, homodimer. Interacts with host GBF1. Interacts (via GOLD domain) with host ACBD3 (via GOLD domain); this interaction allows the formation of a viral protein 3A/ACBD3 heterotetramer with a 2:2 stoichiometry, which will stimulate the recruitment of host PI4KB in order to synthesize PI4P at the viral RNA replication sites. In terms of assembly, interacts with RNA-directed RNA polymerase. Interacts with protein 3AB and with RNA-directed RNA polymerase. As to quaternary structure, interacts with Viral protein genome-linked and with protein 3CD. The cofactor is Mg(2+). In terms of processing, specific enzymatic cleavages in vivo by the viral proteases yield processing intermediates and the mature proteins. Myristoylation is required for the formation of pentamers during virus assembly. Further assembly of 12 pentamers and a molecule of genomic RNA generates the provirion. Post-translationally, during virion maturation, immature virions are rendered infectious following cleavage of VP0 into VP4 and VP2. This maturation seems to be an autocatalytic event triggered by the presence of RNA in the capsid and it is followed by a conformational change infectious virion. In terms of processing, myristoylation is required during RNA encapsidation and formation of the mature virus particle. VPg is uridylylated by the polymerase into VPg-pUpU. This acts as a nucleotide-peptide primer for the genomic RNA replication.

It localises to the virion. Its subcellular location is the host cytoplasm. The protein localises to the host cytoplasmic vesicle membrane. The protein resides in the host nucleus. The catalysed reaction is a ribonucleoside 5'-triphosphate + H2O = a ribonucleoside 5'-diphosphate + phosphate + H(+). It catalyses the reaction Selective cleavage of Tyr-|-Gly bond in the picornavirus polyprotein.. It carries out the reaction RNA(n) + a ribonucleoside 5'-triphosphate = RNA(n+1) + diphosphate. The enzyme catalyses Selective cleavage of Gln-|-Gly bond in the poliovirus polyprotein. In other picornavirus reactions Glu may be substituted for Gln, and Ser or Thr for Gly.. With respect to regulation, replication or transcription is subject to high level of random mutations by the nucleotide analog ribavirin. Forms an icosahedral capsid of pseudo T=3 symmetry with capsid proteins VP2 and VP3. The capsid is 300 Angstroms in diameter, composed of 60 copies of each capsid protein and enclosing the viral positive strand RNA genome. Capsid protein VP1 mainly forms the vertices of the capsid. Capsid protein VP1 interacts with host cell receptor to provide virion attachment to target host cells. This attachment induces virion internalization. Tyrosine kinases are probably involved in the entry process. After binding to its receptor, the capsid undergoes conformational changes. Capsid protein VP1 N-terminus (that contains an amphipathic alpha-helix) and capsid protein VP4 are externalized. Together, they shape a pore in the host membrane through which viral genome is translocated to host cell cytoplasm. Functionally, forms an icosahedral capsid of pseudo T=3 symmetry with capsid proteins VP2 and VP3. The capsid is 300 Angstroms in diameter, composed of 60 copies of each capsid protein and enclosing the viral positive strand RNA genome. Its function is as follows. Lies on the inner surface of the capsid shell. After binding to the host receptor, the capsid undergoes conformational changes. Capsid protein VP4 is released, Capsid protein VP1 N-terminus is externalized, and together, they shape a pore in the host membrane through which the viral genome is translocated into the host cell cytoplasm. In terms of biological role, component of immature procapsids, which is cleaved into capsid proteins VP4 and VP2 after maturation. Allows the capsid to remain inactive before the maturation step. Cysteine protease that cleaves viral polyprotein and specific host proteins. It is responsible for the autocatalytic cleavage between the P1 and P2 regions, which is the first cleavage occurring in the polyprotein. Also cleaves the host translation initiation factor EIF4G1, in order to shut down the capped cellular mRNA translation. Inhibits the host nucleus-cytoplasm protein and RNA trafficking by cleaving host members of the nuclear pores. Counteracts stress granule formation probably by antagonizing its assembly or promoting its dissassembly. Cleaves and inhibits host IFIH1/MDA5, thereby inhibiting the type-I IFN production and the establishment of the antiviral state. Cleaves and inhibits host MAVS, thereby inhibiting the type-I IFN production and the establishment of the antiviral state. Functionally, plays an essential role in the virus replication cycle by acting as a viroporin. Creates a pore in the host endoplasmic reticulum and as a consequence releases Ca2+ in the cytoplasm of infected cell. In turn, high levels of cytoplasmic calcium may trigger membrane trafficking and transport of viral ER-associated proteins to viroplasms, sites of viral genome replication. Its function is as follows. Induces and associates with structural rearrangements of intracellular membranes. Displays RNA-binding, nucleotide binding and NTPase activities. May play a role in virion morphogenesis and viral RNA encapsidation by interacting with the capsid protein VP3. In terms of biological role, localizes the viral replication complex to the surface of membranous vesicles. Together with protein 3CD binds the Cis-Active RNA Element (CRE) which is involved in RNA synthesis initiation. Acts as a cofactor to stimulate the activity of 3D polymerase, maybe through a nucleid acid chaperone activity. Localizes the viral replication complex to the surface of membranous vesicles. It inhibits host cell endoplasmic reticulum-to-Golgi apparatus transport and causes the disassembly of the Golgi complex, possibly through GBF1 interaction. This would result in depletion of MHC, trail receptors and IFN receptors at the host cell surface. Plays an essential role in viral RNA replication by recruiting ACBD3 and PI4KB at the viral replication sites, thereby allowing the formation of the rearranged membranous structures where viral replication takes place. Functionally, acts as a primer for viral RNA replication and remains covalently bound to viral genomic RNA. VPg is uridylylated prior to priming replication into VPg-pUpU. The oriI viral genomic sequence may act as a template for this. The VPg-pUpU is then used as primer on the genomic RNA poly(A) by the RNA-dependent RNA polymerase to replicate the viral genome. During genome replication, the VPg-RNA linkage is removed by the host TDP2, thereby accelerating replication. During the late stage of the replication cycle, host TDP2 is excluded from sites of viral RNA synthesis and encapsidation, allowing for the generation of progeny virions. Its function is as follows. Involved in the viral replication complex and viral polypeptide maturation. It exhibits protease activity with a specificity and catalytic efficiency that is different from protease 3C. Protein 3CD lacks polymerase activity. Protein 3CD binds to the 5'UTR of the viral genome. In terms of biological role, replicates the viral genomic RNA on the surface of intracellular membranes. May form linear arrays of subunits that propagate along a strong head-to-tail interaction called interface-I. Covalently attaches UMP to a tyrosine of VPg, which is used to prime RNA synthesis. The positive stranded RNA genome is first replicated at virus induced membranous vesicles, creating a dsRNA genomic replication form. This dsRNA is then used as template to synthesize positive stranded RNA genomes. ss(+)RNA genomes are either translated, replicated or encapsidated. Major viral protease that mediates proteolytic processing of the polyprotein. Cleaves host EIF5B, contributing to host translation shutoff. Also cleaves host PABPC1, contributing to host translation shutoff. Cleaves host NLRP1, triggers host N-glycine-mediated degradation of the autoinhibitory NLRP1 N-terminal fragment. The protein is Genome polyprotein of Homo sapiens (Human).